The following is a 23-amino-acid chain: Basic phospholipase A2 homolog CTs-K49c (23 aa).

In terms of processing, contains 7 disulfide bonds. In terms of tissue distribution, expressed by the venom gland.

Its subcellular location is the secreted. In terms of biological role, snake venom phospholipase A2 homolog that lacks catalytic activity. Shows myotoxic activities. Induces local edema a few hours after injection (5-10 ug) in the hind paw. The protein is Basic phospholipase A2 homolog CTs-K49c of Trimeresurus stejnegeri (Chinese green tree viper).